The sequence spans 287 residues: Ret finger protein-like 4A (287 aa).

Residues 11 to 53 form an RING-type; degenerate zinc finger; the sequence is CPVCLKDLEEAVQLKCGYACCLQCLNSLQKEPDGEGLLCRFCS. A B30.2/SPRY domain is found at 78–276; that stretch reads EPKLKSVLTM…LSICSVINPS (199 aa).

In terms of assembly, interacts with PSMB1, UBE2A and CCNB1.

Its subcellular location is the cytoplasm. It localises to the nucleus. The chain is Ret finger protein-like 4A (RFPL4A) from Homo sapiens (Human).